Reading from the N-terminus, the 89-residue chain is Small ribosomal subunit protein uS15 (89 aa).

Positions 1 to 25 (MSLDTTEKQQLINTHQTHGTDTGSA) are disordered. Polar residues predominate over residues 8–25 (KQQLINTHQTHGTDTGSA).

Belongs to the universal ribosomal protein uS15 family. In terms of assembly, part of the 30S ribosomal subunit. Forms a bridge to the 50S subunit in the 70S ribosome, contacting the 23S rRNA.

In terms of biological role, one of the primary rRNA binding proteins, it binds directly to 16S rRNA where it helps nucleate assembly of the platform of the 30S subunit by binding and bridging several RNA helices of the 16S rRNA. Forms an intersubunit bridge (bridge B4) with the 23S rRNA of the 50S subunit in the ribosome. In Parasynechococcus marenigrum (strain WH8102), this protein is Small ribosomal subunit protein uS15.